Consider the following 1200-residue polypeptide: NACHT, LRR and PYD domains-containing protein 5 (1200 aa).

A Pyrin domain is found at 57–148 (SLTFSSYGLQ…SEKARDDMKR (92 aa)). Residues 142 to 152 (ARDDMKRHSPE) show a composition bias toward basic and acidic residues. The segment at 142 to 232 (ARDDMKRHSP…TEEQGHGGDT (91 aa)) is disordered. Positions 173–182 (QAVQQDSATA) are enriched in polar residues. Composition is skewed to low complexity over residues 192–202 (QAMEQEGATAA) and 209–221 (ISQAMEQEGATAA). In terms of domain architecture, NACHT spans 280 to 602 (RTVVLHGKSG…ALYYVLEGLE (323 aa)). Residue 286 to 293 (GKSGIGKS) participates in ATP binding. LRR repeat units lie at residues 704–727 (LNSFQEVWLPINQNLDLIASSFCL), 730–753 (CPYLRKIRVDVKGIFPRDESAEAC), 780–803 (HPHLRQLDLGSSILTERAMKTLCA), 809–832 (TCKIQTLMFRNAQITPGVQHLWRI), 836–863 (NRNLRSLNLGGTHLKEEDVRMACEALKH), 865–892 (KCLLESLRLDCCGLTHACYLKISQILTT), 893–916 (SPSLKSLSLAGNKVTDQGVMPLSD), 950–973 (NRSLTHLCLSNNSLGNEGVNLLCR), 979–1002 (HCSLQRLMLNQCHLDTAGCGFLAL), 1007–1034 (NSWLTHLSLSMNPVEDNGVKLLCEVMRE), 1036–1059 (SCHLQDLELVKCHLTAACCESLSC), 1064–1092 (SRHLKSLDLTDNALGDGGVAALCEGLKQK), and 1121–1142 (NRHLTSLNLVQNNFSPKGMMKL).

The protein belongs to the NLRP family. As to quaternary structure, component of the subcortical maternal complex (SCMC), at least composed of NLRP5, KHDC3, OOEP, and TLE6 isoform 1. Within the complex, interacts with OOEP, KHDC3L and TLE6. The SCMC may facilitate translocation of its components between the nuclear and cytoplasmic compartments. As part of the SCMC interacts with the SCMC-associated protein ZBED3. As part of the SCMC interacts with the SCMC-associated protein CFL1/Cofilin-1. Interacts with PRKCE. Interacts with TUBB3 at cytoskeleton microtubules. Phosphorylated by PRKCE. Expressed in cumulus cells (at protein level). Highly abundant in oocytes and early embryos, however poorly expressed in somatic tissues such as the liver and spinal cord.

Its subcellular location is the cytoplasm. It is found in the cytoplasmic vesicle. It localises to the secretory vesicle. The protein resides in the cortical granule. The protein localises to the mitochondrion. Its subcellular location is the nucleus. It is found in the nucleolus. It localises to the golgi apparatus. Its function is as follows. Component of the subcortical maternal complex (SCMC), a multiprotein complex that plays a key role in early embryonic development. The SCMC complex is a structural constituent of cytoplasmic lattices, which consist in fibrous structures found in the cytoplasm of oocytes and preimplantation embryos. They are required to store maternal proteins critical for embryonic development, such as proteins that control epigenetic reprogramming of the preimplantation embryo, and prevent their degradation or activation. Required for the localization of cortical granules to the cortex of oocytes, via association with the cortical actin scaffold. Required for cortical actin clearance prior to oocyte exocytosis and prevention of polyspermy. Involved in regulating post-fertilization Ca(2+) release and endoplasmic reticulum storage (ER) storage via regulation of cellular localization. May be involved in the localization of mitochondria to the cytoplasm and perinuclear region in oocytes and early stage embryos, independent of its role in CPL formation. The polypeptide is NACHT, LRR and PYD domains-containing protein 5 (NLRP5) (Homo sapiens (Human)).